The primary structure comprises 262 residues: Acyl-[acyl-carrier-protein]--UDP-N-acetylglucosamine O-acyltransferase (262 aa).

The protein belongs to the transferase hexapeptide repeat family. LpxA subfamily. As to quaternary structure, homotrimer.

The protein resides in the cytoplasm. The catalysed reaction is a (3R)-hydroxyacyl-[ACP] + UDP-N-acetyl-alpha-D-glucosamine = a UDP-3-O-[(3R)-3-hydroxyacyl]-N-acetyl-alpha-D-glucosamine + holo-[ACP]. It participates in glycolipid biosynthesis; lipid IV(A) biosynthesis; lipid IV(A) from (3R)-3-hydroxytetradecanoyl-[acyl-carrier-protein] and UDP-N-acetyl-alpha-D-glucosamine: step 1/6. Functionally, involved in the biosynthesis of lipid A, a phosphorylated glycolipid that anchors the lipopolysaccharide to the outer membrane of the cell. The protein is Acyl-[acyl-carrier-protein]--UDP-N-acetylglucosamine O-acyltransferase of Yersinia enterocolitica.